A 58-amino-acid chain; its full sequence is uncharacterized protein (58 aa).

2 consecutive 4Fe-4S ferredoxin-type domains span residues 2–27 (GIKI…IKTY) and 28–57 (GVAI…VDTS). [4Fe-4S] cluster-binding residues include Cys-9, Cys-12, Cys-15, Cys-19, Cys-37, Cys-40, Cys-43, and Cys-47.

Requires [4Fe-4S] cluster as cofactor.

Its function is as follows. Ferredoxins are iron-sulfur proteins that transfer electrons probably in the CO-dehydrogenase complex. This is an uncharacterized protein from Methanocaldococcus jannaschii (strain ATCC 43067 / DSM 2661 / JAL-1 / JCM 10045 / NBRC 100440) (Methanococcus jannaschii).